The sequence spans 138 residues: Putative pre-16S rRNA nuclease (138 aa).

This sequence belongs to the YqgF nuclease family.

The protein resides in the cytoplasm. Could be a nuclease involved in processing of the 5'-end of pre-16S rRNA. The protein is Putative pre-16S rRNA nuclease of Carboxydothermus hydrogenoformans (strain ATCC BAA-161 / DSM 6008 / Z-2901).